The sequence spans 258 residues: 14-3-3 protein 6 (258 aa).

The disordered stretch occupies residues 238–258; it reads DMQDDGTDEIKEATPKPDDNE. A compositionally biased stretch (basic and acidic residues) spans 245–258; it reads DEIKEATPKPDDNE.

Belongs to the 14-3-3 family. In terms of assembly, homodimer.

The protein is 14-3-3 protein 6 (TFT6) of Solanum lycopersicum (Tomato).